The following is a 113-amino-acid chain: U11-theraphotoxin-Hhn1a (113 aa).

A signal peptide spans M1–A21. The propeptide occupies D22–R74. The disordered stretch occupies residues E61–D83. 3 disulfides stabilise this stretch: C75-C90, C82-C95, and C89-C110.

It belongs to the neurotoxin 14 (magi-1) family. 01 (HNTX-16) subfamily. Expressed by the venom gland.

It localises to the secreted. In terms of biological role, probable ion channel inhibitor. The chain is U11-theraphotoxin-Hhn1a from Cyriopagopus hainanus (Chinese bird spider).